Reading from the N-terminus, the 466-residue chain is uncharacterized protein (466 aa).

The tract at residues Met-1–Lys-22 is disordered. Over residues Arg-7–Tyr-19 the composition is skewed to polar residues. 2 positions are modified to phosphoserine: Ser-40 and Ser-42. The region spanning Tyr-108 to His-183 is the RRM domain. A disordered region spans residues Arg-186–Asp-207. The segment covering Pro-188–Asp-207 has biased composition (basic and acidic residues). The CID domain maps to Leu-209 to Thr-368. The residue at position 371 (Ser-371) is a Phosphoserine. Over residues Ser-425–Pro-436 the composition is skewed to low complexity. Residues Ser-425 to Phe-448 form a disordered region.

It is found in the nucleus. The protein resides in the cytoplasm. This is an uncharacterized protein from Schizosaccharomyces pombe (strain 972 / ATCC 24843) (Fission yeast).